Here is a 404-residue protein sequence, read N- to C-terminus: F-box protein At2g17036 (404 aa).

Positions 2–50 constitute an F-box domain; it reads MDWATLPKDLLDLISKCLESSFDLIQFRSVCSSWRSAAGPKRLLWAHNL.

This is F-box protein At2g17036 from Arabidopsis thaliana (Mouse-ear cress).